Reading from the N-terminus, the 298-residue chain is Probable pyridoxal 5'-phosphate synthase subunit SNZ3 (298 aa).

Residue aspartate 21 coordinates D-ribose 5-phosphate. Lysine 78 acts as the Schiff-base intermediate with D-ribose 5-phosphate in catalysis. Residues glycine 150, glycine 213, and 234 to 235 (GS) contribute to the D-ribose 5-phosphate site.

This sequence belongs to the PdxS/SNZ family. As to quaternary structure, homohexamer. Interacts with THI11.

The catalysed reaction is aldehydo-D-ribose 5-phosphate + D-glyceraldehyde 3-phosphate + L-glutamine = pyridoxal 5'-phosphate + L-glutamate + phosphate + 3 H2O + H(+). It functions in the pathway cofactor biosynthesis; pyridoxal 5'-phosphate biosynthesis. Functionally, catalyzes the formation of pyridoxal 5'-phosphate from ribose 5-phosphate (RBP), glyceraldehyde 3-phosphate (G3P) and ammonia. The ammonia is provided by a SNO isoform. Can also use ribulose 5-phosphate and dihydroxyacetone phosphate as substrates, resulting from enzyme-catalyzed isomerization of RBP and G3P, respectively. This Saccharomyces cerevisiae (strain ATCC 204508 / S288c) (Baker's yeast) protein is Probable pyridoxal 5'-phosphate synthase subunit SNZ3 (SNZ3).